The following is a 216-amino-acid chain: MSNSSTPSCIIIAIAGASASGKSLIASTVHRELCDELGCEEIGIISEDSYYKDQSHLDMEDRIKTNYDHPNSMDRHLLIEHLKALKSGQPVDIPVYSYVEHTRTNQVQHFEPKKVIILEGILLLTDEKLRDEVSVSVFVDTPLDICFIRRLQRDMKERGRSLESVVEQYRKTVRPMFLQFIEPSKQYADIVIPRGGKNRIAINMLKAQIRQLLGKR.

Residue 16–23 (GASASGKS) participates in ATP binding.

Belongs to the uridine kinase family.

The protein localises to the cytoplasm. It catalyses the reaction uridine + ATP = UMP + ADP + H(+). It carries out the reaction cytidine + ATP = CMP + ADP + H(+). It participates in pyrimidine metabolism; CTP biosynthesis via salvage pathway; CTP from cytidine: step 1/3. It functions in the pathway pyrimidine metabolism; UMP biosynthesis via salvage pathway; UMP from uridine: step 1/1. The sequence is that of Uridine kinase from Pasteurella multocida (strain Pm70).